Reading from the N-terminus, the 536-residue chain is Putative ATP-dependent RNA helicase L364 (536 aa).

Residues 47–214 (ISILLKYFLV…IPFYLMNFIP (168 aa)) form the Helicase ATP-binding domain. Position 60–67 (60–67 (SDTGVGKT)) interacts with ATP. A DEAH box motif is present at residues 160-163 (DESH). Positions 288-334 (LSDDSDKIAEAYEEIAELMRELEEKKTQCKNHLAKIQKLKQEIELRK) form a coiled coil. In terms of domain architecture, Helicase C-terminal spans 338–486 (FIEQTQLYLE…ISAINDGDLE (149 aa)). Residues 502 to 536 (VLNEPVNNPIEEPVNDPVKDPVEDLTDNQPNIVEV) form a disordered region.

This sequence belongs to the DEAD box helicase family. DEAH subfamily.

It carries out the reaction ATP + H2O = ADP + phosphate + H(+). The protein is Putative ATP-dependent RNA helicase L364 of Acanthamoeba polyphaga (Amoeba).